Consider the following 314-residue polypeptide: MEQLCKRYVHTPAAFIQNIVANTKRTTLATQLSVEKAKKKVPKTALKKKLNSRPKERLPNWLKLNDVFNIHYEKPSNSDINKVNRFFNKAKVEFEWCAASFDDIPENPFLNKKSHKDILKDHGECGTTLIDTLPEVIFLGGTNVGKSSILNNITTSHVSRDLGSLARVSKTTGFTKTLNCYNVGNRLRMIDSPGYGFNSSKEQGKVTLQYLLERKQLVRCFLLLAGDKEINNTDNMIIQYIHEHGVPFEVVFTKMDKVKDLNKFKKKVMSSGLMDLPTLPRLVLTNSLTSSTSPKRFGIDLLRYVIFQSCGLIL.

Residues 132–312 form the EngB-type G domain; sequence TLPEVIFLGG…RYVIFQSCGL (181 aa). GTP-binding positions include 140-147, 173-177, 191-194, 253-256, and 290-292; these read GGTNVGKS, GFTKT, DSPG, TKMD, and SST. Mg(2+) contacts are provided by Ser-147 and Thr-175.

It belongs to the TRAFAC class TrmE-Era-EngA-EngB-Septin-like GTPase superfamily. EngB GTPase family. In terms of assembly, associates with the mitochondrial ribosome. Requires Mg(2+) as cofactor. In terms of processing, sumoylated upon ethanol stress.

The protein resides in the mitochondrion. Functionally, component of MIOREX complexes, large expressome-like assemblies of ribosomes with factors involved in all the steps of post-transcriptional gene expression. This Saccharomyces cerevisiae (strain ATCC 204508 / S288c) (Baker's yeast) protein is MIOREX complex component 8.